We begin with the raw amino-acid sequence, 351 residues long: Delta(7)-sterol 5(6)-desaturase (351 aa).

The next 3 helical transmembrane spans lie at 88 to 108, 136 to 156, and 173 to 193; these read LSLFLVTTVFGWLLYLIVASF, GLGAIPYMAVMTVPWFLLELH, and VRLALEALFFILFTDFGIYLL. The Fatty acid hydroxylase domain occupies 180–305; the sequence is LFFILFTDFG…FTTLWDRLGG (126 aa). The Histidine box-1 motif lies at 194–198; the sequence is HRWLH. The Histidine box-2 signature appears at 207–211; that stretch reads HKKHH. A helical membrane pass occupies residues 237–257; the sequence is HLFPMLFPLHKVSYLVLFTFV. Positions 282 to 286 match the Histidine box-3 motif; that stretch reads HTVHH.

It belongs to the sterol desaturase family. The cofactor is Fe cation.

It is found in the endoplasmic reticulum membrane. The catalysed reaction is a Delta(7)-sterol + 2 Fe(II)-[cytochrome b5] + O2 + 2 H(+) = a Delta(5),Delta(7)-sterol + 2 Fe(III)-[cytochrome b5] + 2 H2O. Its pathway is steroid metabolism; ergosterol biosynthesis; ergosterol from zymosterol: step 3/5. In terms of biological role, catalyzes the introduction of a C-5 double bond in the B ring of ergosterol. May contribute to the regulation of ergosterol biosynthesis. This is Delta(7)-sterol 5(6)-desaturase (ERG3) from Eremothecium gossypii (strain ATCC 10895 / CBS 109.51 / FGSC 9923 / NRRL Y-1056) (Yeast).